The primary structure comprises 393 residues: Lipid-A-disaccharide synthase (393 aa).

The protein belongs to the LpxB family.

It carries out the reaction a lipid X + a UDP-2-N,3-O-bis[(3R)-3-hydroxyacyl]-alpha-D-glucosamine = a lipid A disaccharide + UDP + H(+). The protein operates within bacterial outer membrane biogenesis; LPS lipid A biosynthesis. Condensation of UDP-2,3-diacylglucosamine and 2,3-diacylglucosamine-1-phosphate to form lipid A disaccharide, a precursor of lipid A, a phosphorylated glycolipid that anchors the lipopolysaccharide to the outer membrane of the cell. The sequence is that of Lipid-A-disaccharide synthase from Bordetella petrii (strain ATCC BAA-461 / DSM 12804 / CCUG 43448).